The sequence spans 583 residues: Lipoprotein LpqB (583 aa).

An N-terminal signal peptide occupies residues 1–29 (MSNKTTEATKTTKVKKVLSVVAGLGLLAG). Cysteine 30 is lipidated: N-palmitoyl cysteine. The S-diacylglycerol cysteine moiety is linked to residue cysteine 30. A disordered region spans residues 38–63 (NPEAISSYAPAPSGQEAPTPTDGQPS).

The protein belongs to the LpqB lipoprotein family.

Its subcellular location is the cell membrane. This Corynebacterium jeikeium (strain K411) protein is Lipoprotein LpqB.